The following is a 76-amino-acid chain: UPF0291 protein BC_1827 (76 aa).

The protein belongs to the UPF0291 family.

Its subcellular location is the cytoplasm. The chain is UPF0291 protein BC_1827 from Bacillus cereus (strain ATCC 14579 / DSM 31 / CCUG 7414 / JCM 2152 / NBRC 15305 / NCIMB 9373 / NCTC 2599 / NRRL B-3711).